The following is a 268-amino-acid chain: Aliphatic sulfonates import ATP-binding protein SsuB 2 (268 aa).

One can recognise an ABC transporter domain in the interval 16 to 230 (VQLRNVVRQF…DSGQAGFQSI (215 aa)). An ATP-binding site is contributed by 48-55 (GASGSGKT).

Belongs to the ABC transporter superfamily. Aliphatic sulfonates importer (TC 3.A.1.17.2) family. As to quaternary structure, the complex is composed of two ATP-binding proteins (SsuB), two transmembrane proteins (SsuC) and a solute-binding protein (SsuA).

It is found in the cell inner membrane. It carries out the reaction ATP + H2O + aliphatic sulfonate-[sulfonate-binding protein]Side 1 = ADP + phosphate + aliphatic sulfonateSide 2 + [sulfonate-binding protein]Side 1.. Part of the ABC transporter complex SsuABC involved in aliphatic sulfonates import. Responsible for energy coupling to the transport system. The chain is Aliphatic sulfonates import ATP-binding protein SsuB 2 from Pseudomonas savastanoi pv. phaseolicola (strain 1448A / Race 6) (Pseudomonas syringae pv. phaseolicola (strain 1448A / Race 6)).